Consider the following 169-residue polypeptide: Cytochrome c oxidase subunit 4 isoform 1, mitochondrial (169 aa).

The transit peptide at 1–22 (MLATRVFSLIGRRAISTSVCVR) directs the protein to the mitochondrion. Over 23-98 (AHGSVVKSED…SFAEMNRSTN (76 aa)) the chain is Mitochondrial matrix. Lys-29 is modified (N6-acetyllysine; alternate). Lys-29 bears the N6-succinyllysine; alternate mark. Lys-53 carries the post-translational modification N6-acetyllysine. 2 positions are modified to phosphoserine: Ser-56 and Ser-58. At Lys-60 the chain carries N6-acetyllysine; alternate. The residue at position 60 (Lys-60) is an N6-succinyllysine; alternate. Lys-67 carries the post-translational modification N6-acetyllysine. The helical transmembrane segment at 99–124 (EWKTVVGAAMFFIGFTALLLIWEKHY) threads the bilayer. Residues 125–169 (VYGPIPHTFEEEWVAKQTKRMLDMKVAPIQGFSAKWDYDKNEWKK) lie on the Mitochondrial intermembrane side of the membrane.

The protein belongs to the cytochrome c oxidase IV family. In terms of assembly, component of the cytochrome c oxidase (complex IV, CIV), a multisubunit enzyme composed of 14 subunits. The complex is composed of a catalytic core of 3 subunits MT-CO1, MT-CO2 and MT-CO3, encoded in the mitochondrial DNA, and 11 supernumerary subunits COX4I1 (or COX4I2), COX5A, COX5B, COX6A2 (or COX6A1), COX6B1 (or COX6B2), COX6C, COX7A1 (or COX7A2), COX7B, COX7C, COX8B and NDUFA4, which are encoded in the nuclear genome. The complex exists as a monomer or a dimer and forms supercomplexes (SCs) in the inner mitochondrial membrane with NADH-ubiquinone oxidoreductase (complex I, CI) and ubiquinol-cytochrome c oxidoreductase (cytochrome b-c1 complex, complex III, CIII), resulting in different assemblies (supercomplex SCI(1)III(2)IV(1) and megacomplex MCI(2)III(2)IV(2)). Interacts with PHB2; the interaction decreases in absence of SPHK2. Interacts with AFG1L. Interacts with ABCB7; this interaction allows the regulation of cellular iron homeostasis and cellular reactive oxygen species (ROS) levels in cardiomyocytes. Interacts with FLVCR2; this interaction occurs in the absence of heme and is disrupted upon heme binding. Interacts with IRGC.

It is found in the mitochondrion inner membrane. The protein operates within energy metabolism; oxidative phosphorylation. In terms of biological role, component of the cytochrome c oxidase, the last enzyme in the mitochondrial electron transport chain which drives oxidative phosphorylation. The respiratory chain contains 3 multisubunit complexes succinate dehydrogenase (complex II, CII), ubiquinol-cytochrome c oxidoreductase (cytochrome b-c1 complex, complex III, CIII) and cytochrome c oxidase (complex IV, CIV), that cooperate to transfer electrons derived from NADH and succinate to molecular oxygen, creating an electrochemical gradient over the inner membrane that drives transmembrane transport and the ATP synthase. Cytochrome c oxidase is the component of the respiratory chain that catalyzes the reduction of oxygen to water. Electrons originating from reduced cytochrome c in the intermembrane space (IMS) are transferred via the dinuclear copper A center (CU(A)) of subunit 2 and heme A of subunit 1 to the active site in subunit 1, a binuclear center (BNC) formed by heme A3 and copper B (CU(B)). The BNC reduces molecular oxygen to 2 water molecules using 4 electrons from cytochrome c in the IMS and 4 protons from the mitochondrial matrix. This chain is Cytochrome c oxidase subunit 4 isoform 1, mitochondrial (COX4I1), found in Bos taurus (Bovine).